Consider the following 441-residue polypeptide: Ribosomal protein uS12 methylthiotransferase RimO (441 aa).

The region spanning Pro8 to Pro118 is the MTTase N-terminal domain. 6 residues coordinate [4Fe-4S] cluster: Cys17, Cys53, Cys82, Cys150, Cys154, and Cys157. Residues Leu136–Glu373 enclose the Radical SAM core domain. One can recognise a TRAM domain in the interval Gln376–Val441.

Belongs to the methylthiotransferase family. RimO subfamily. [4Fe-4S] cluster is required as a cofactor.

It localises to the cytoplasm. The catalysed reaction is L-aspartate(89)-[ribosomal protein uS12]-hydrogen + (sulfur carrier)-SH + AH2 + 2 S-adenosyl-L-methionine = 3-methylsulfanyl-L-aspartate(89)-[ribosomal protein uS12]-hydrogen + (sulfur carrier)-H + 5'-deoxyadenosine + L-methionine + A + S-adenosyl-L-homocysteine + 2 H(+). Catalyzes the methylthiolation of an aspartic acid residue of ribosomal protein uS12. This chain is Ribosomal protein uS12 methylthiotransferase RimO, found in Salmonella heidelberg (strain SL476).